The chain runs to 176 residues: 3-hydroxydecanoyl-[acyl-carrier-protein] dehydratase (176 aa).

Residue H71 is part of the active site.

The protein belongs to the thioester dehydratase family. FabA subfamily. As to quaternary structure, homodimer.

It is found in the cytoplasm. The enzyme catalyses a (3R)-hydroxyacyl-[ACP] = a (2E)-enoyl-[ACP] + H2O. It carries out the reaction (3R)-hydroxydecanoyl-[ACP] = (2E)-decenoyl-[ACP] + H2O. The catalysed reaction is (2E)-decenoyl-[ACP] = (3Z)-decenoyl-[ACP]. It functions in the pathway lipid metabolism; fatty acid biosynthesis. In terms of biological role, necessary for the introduction of cis unsaturation into fatty acids. Catalyzes the dehydration of (3R)-3-hydroxydecanoyl-ACP to E-(2)-decenoyl-ACP and then its isomerization to Z-(3)-decenoyl-ACP. Can catalyze the dehydratase reaction for beta-hydroxyacyl-ACPs with saturated chain lengths up to 16:0, being most active on intermediate chain length. This chain is 3-hydroxydecanoyl-[acyl-carrier-protein] dehydratase, found in Rhodopseudomonas palustris (strain BisA53).